We begin with the raw amino-acid sequence, 354 residues long: 3-dehydroquinate synthase (354 aa).

Residues 66–71 (SGETSK), 100–104 (GATGD), 124–125 (TT), lysine 136, lysine 145, and 163–166 (FLET) contribute to the NAD(+) site. Positions 178, 242, and 256 each coordinate Zn(2+).

It belongs to the sugar phosphate cyclases superfamily. Dehydroquinate synthase family. Requires NAD(+) as cofactor. Co(2+) serves as cofactor. Zn(2+) is required as a cofactor.

It is found in the cytoplasm. It catalyses the reaction 7-phospho-2-dehydro-3-deoxy-D-arabino-heptonate = 3-dehydroquinate + phosphate. The protein operates within metabolic intermediate biosynthesis; chorismate biosynthesis; chorismate from D-erythrose 4-phosphate and phosphoenolpyruvate: step 2/7. In terms of biological role, catalyzes the conversion of 3-deoxy-D-arabino-heptulosonate 7-phosphate (DAHP) to dehydroquinate (DHQ). This chain is 3-dehydroquinate synthase, found in Staphylococcus epidermidis (strain ATCC 35984 / DSM 28319 / BCRC 17069 / CCUG 31568 / BM 3577 / RP62A).